Here is a 283-residue protein sequence, read N- to C-terminus: 4-hydroxy-tetrahydrodipicolinate reductase (283 aa).

NAD(+) contacts are provided by residues 15 to 20 (GALGRM) and 116 to 118 (GTT). His172 serves as the catalytic Proton donor/acceptor. A (S)-2,3,4,5-tetrahydrodipicolinate-binding site is contributed by His173. Catalysis depends on Lys176, which acts as the Proton donor. Position 182–183 (182–183 (GT)) interacts with (S)-2,3,4,5-tetrahydrodipicolinate.

Belongs to the DapB family.

It is found in the cytoplasm. It carries out the reaction (S)-2,3,4,5-tetrahydrodipicolinate + NAD(+) + H2O = (2S,4S)-4-hydroxy-2,3,4,5-tetrahydrodipicolinate + NADH + H(+). The catalysed reaction is (S)-2,3,4,5-tetrahydrodipicolinate + NADP(+) + H2O = (2S,4S)-4-hydroxy-2,3,4,5-tetrahydrodipicolinate + NADPH + H(+). Its pathway is amino-acid biosynthesis; L-lysine biosynthesis via DAP pathway; (S)-tetrahydrodipicolinate from L-aspartate: step 4/4. Catalyzes the conversion of 4-hydroxy-tetrahydrodipicolinate (HTPA) to tetrahydrodipicolinate. This chain is 4-hydroxy-tetrahydrodipicolinate reductase, found in Prochlorococcus marinus (strain MIT 9313).